The following is a 110-amino-acid chain: UPF0122 protein SMU_1061 (110 aa).

It belongs to the UPF0122 family.

Might take part in the signal recognition particle (SRP) pathway. This is inferred from the conservation of its genetic proximity to ftsY/ffh. May be a regulatory protein. This chain is UPF0122 protein SMU_1061 (ylxM), found in Streptococcus mutans serotype c (strain ATCC 700610 / UA159).